The sequence spans 311 residues: ADP-ribosyl cyclase/cyclic ADP-ribose hydrolase 2 (311 aa).

The first 24 residues, 1 to 24 (MAVQGGLLSLWLWLWLSLLTVLLG), serve as a signal peptide directing secretion. Intrachain disulfides connect cysteine 46–cysteine 60, cysteine 76–cysteine 156, and cysteine 137–cysteine 150. Asparagine 59 and asparagine 88 each carry an N-linked (GlcNAc...) asparagine glycan. Tryptophan 102 contacts NAD(+). Nicotinamide is bound at residue tryptophan 102. Asparagine 141 carries an N-linked (GlcNAc...) asparagine glycan. An NAD(+)-binding site is contributed by tryptophan 165. Asparagine 185 carries an N-linked (GlcNAc...) asparagine glycan. Glutamate 203 provides a ligand contact to NAD(+). Cystine bridges form between cysteine 231-cysteine 252 and cysteine 264-cysteine 273. Serine 286 is lipidated: GPI-anchor amidated serine. Residues 287 to 311 (ASLHAIGDASLLISLLVALASSSQA) constitute a propeptide that is removed on maturation.

Belongs to the ADP-ribosyl cyclase family. In terms of assembly, homodimer. As to expression, expressed in the bone marrow, spleen and thymus in lymphoid organs, and the lung, kidney and heart in non-lymphoid organs.

Its subcellular location is the cell membrane. The catalysed reaction is NAD(+) + H2O = ADP-D-ribose + nicotinamide + H(+). It carries out the reaction NAD(+) = cyclic ADP-beta-D-ribose + nicotinamide + H(+). The enzyme catalyses cyclic ADP-beta-D-ribose + H2O = ADP-D-ribose. Its function is as follows. Catalyzes both the synthesis of cyclic ADP-beta-D-ribose (cADPR) from NAD(+), and its hydrolysis to ADP-D-ribose (ADPR). Cyclic ADPR is known to serve as an endogenous second messenger that elicits calcium release from intracellular stores, and thus regulates the mobilization of intracellular calcium. May be involved in pre-B-cell growth. The sequence is that of ADP-ribosyl cyclase/cyclic ADP-ribose hydrolase 2 (Bst1) from Mus musculus (Mouse).